A 325-amino-acid polypeptide reads, in one-letter code: Olfactory receptor 10AC1 (325 aa).

The Extracellular segment spans residues 1 to 26 (MDSPSNATVPCGFLLQGFSEFPHLRP). Asparagine 6 carries N-linked (GlcNAc...) asparagine glycosylation. A helical transmembrane segment spans residues 27-47 (VLFLLLLGVHLATLGGNLLIL). The Cytoplasmic segment spans residues 48–57 (VAVASMPSRQ). The helical transmembrane segment at 58 to 78 (PMLLFLCQLSAIELCYTLVVV) threads the bilayer. Topologically, residues 79–101 (PRSLVDLSTPGHRRGSPISFLSC) are extracellular. Residues 102 to 122 (AFQMQMFVALGGAECFLLAAM) traverse the membrane as a helical segment. Residues 123–147 (AYDRYVAICHPLRYAAVVTPGLCAR) are Cytoplasmic-facing. The helical transmembrane segment at 148-168 (LALACCLRGLAVSVGLTVAIF) threads the bilayer. Topologically, residues 169-171 (HLP) are extracellular. Residues 172–192 (FCGSRLLLHFFCDITALLHLA) form a helical membrane-spanning segment. The Cytoplasmic segment spans residues 193–200 (CTRSYADE). The helical transmembrane segment at 201-221 (LPLLGACLVLLLLPSVLILAS) threads the bilayer. At 222-243 (YGAIAAALRRLRCPKGRGKAAS) the chain is on the extracellular side. A helical membrane pass occupies residues 244–264 (TCALHLAVTFLHYGCATFMYV). The Cytoplasmic segment spans residues 265-325 (RPRASYSPRL…QAPGGDLREL (61 aa)).

The protein belongs to the G-protein coupled receptor 1 family.

It is found in the cell membrane. Its function is as follows. Odorant receptor. The polypeptide is Olfactory receptor 10AC1 (OR10AC1) (Homo sapiens (Human)).